A 252-amino-acid polypeptide reads, in one-letter code: MKTVTVKDLVIGTGAPKIIVSLMAKDIARVKSEALAYREADFDILEWRVDHYADLSNVESVMAAAKILRETMPEKPLLFTFRSAKEGGEQAISTEAYIALNRAAIDSGLVDMIDLELFTGDDQVKETVAYAHAHDVKVVMSNHDFHKTPEAEEIIARLRKMQSFDADIPKIALMPQSTSDVLTLLTATLEMQEQYADRPIITMSMAKTGVISRLAGEVFGSAATFGAVKKASAPGQISVNDLRTVLTILHQA.

3-dehydroquinate-binding positions include S21, 46 to 48 (EWR), and R82. The Proton donor/acceptor role is filled by H143. Catalysis depends on K170, which acts as the Schiff-base intermediate with substrate. Residues R213, S232, and Q236 each coordinate 3-dehydroquinate.

Belongs to the type-I 3-dehydroquinase family. Homodimer.

The catalysed reaction is 3-dehydroquinate = 3-dehydroshikimate + H2O. It functions in the pathway metabolic intermediate biosynthesis; chorismate biosynthesis; chorismate from D-erythrose 4-phosphate and phosphoenolpyruvate: step 3/7. Functionally, involved in the third step of the chorismate pathway, which leads to the biosynthesis of aromatic amino acids. Catalyzes the cis-dehydration of 3-dehydroquinate (DHQ) and introduces the first double bond of the aromatic ring to yield 3-dehydroshikimate. This chain is 3-dehydroquinate dehydratase, found in Escherichia coli O139:H28 (strain E24377A / ETEC).